The chain runs to 321 residues: Ferredoxin--NADP reductase (321 aa).

FAD contacts are provided by Glu-33, Gln-41, Tyr-46, Val-86, Leu-119, Asp-277, and Ser-318.

The protein belongs to the ferredoxin--NADP reductase type 2 family. As to quaternary structure, homodimer. FAD serves as cofactor.

It carries out the reaction 2 reduced [2Fe-2S]-[ferredoxin] + NADP(+) + H(+) = 2 oxidized [2Fe-2S]-[ferredoxin] + NADPH. This is Ferredoxin--NADP reductase from Lactococcus lactis subsp. cremoris (strain SK11).